A 151-amino-acid chain; its full sequence is MKGLKKKRRIQIITLAFVALAGSTALIGYAMRDGINFFRSPTQVVEAPPSETEVFRIGGLVEKGSLVRGQGETVTFRVTDTNATVPVRFTGVLPDLFAEDAGMVGTGRLVDGVFQASEILAKHDETYMPKEVVDALKEQGVFQHTEDQPQG.

Residues 1 to 9 (MKGLKKKRR) are Cytoplasmic-facing. Residues 10–30 (IQIITLAFVALAGSTALIGYA) form a helical; Signal-anchor for type II membrane protein membrane-spanning segment. Residues 31-151 (MRDGINFFRS…FQHTEDQPQG (121 aa)) are Periplasmic-facing. Heme contacts are provided by H123 and Y127.

Belongs to the CcmE/CycJ family.

It localises to the cell inner membrane. Heme chaperone required for the biogenesis of c-type cytochromes. Transiently binds heme delivered by CcmC and transfers the heme to apo-cytochromes in a process facilitated by CcmF and CcmH. The polypeptide is Cytochrome c-type biogenesis protein CcmE (Cereibacter sphaeroides (strain ATCC 17025 / ATH 2.4.3) (Rhodobacter sphaeroides)).